Consider the following 261-residue polypeptide: Urease accessory protein UreD (261 aa).

The protein belongs to the UreD family. As to quaternary structure, ureD, UreF and UreG form a complex that acts as a GTP-hydrolysis-dependent molecular chaperone, activating the urease apoprotein by helping to assemble the nickel containing metallocenter of UreC. The UreE protein probably delivers the nickel.

The protein localises to the cytoplasm. Functionally, required for maturation of urease via the functional incorporation of the urease nickel metallocenter. The protein is Urease accessory protein UreD of Haemophilus influenzae (strain ATCC 51907 / DSM 11121 / KW20 / Rd).